A 206-amino-acid polypeptide reads, in one-letter code: Ras-related protein Ral-B (206 aa).

Position 21-29 (21-29 (GSGGVGKSA)) interacts with GTP. Positions 43 to 51 (YEPTKADSY) match the Effector region motif. Residues 68–72 (DTAGQ), 128–131 (NKSD), and 158–160 (SAK) each bind GTP. Residues 181–206 (MSENKDKNGRKSGKSKKSFKERCCLL) are disordered. At Cys-203 the chain carries Cysteine methyl ester. The S-geranylgeranyl cysteine moiety is linked to residue Cys-203. A propeptide spans 204 to 206 (CLL) (removed in mature form).

Belongs to the small GTPase superfamily. Ras family. As to quaternary structure, interacts with EXOC2/Sec5 and EXOC8/Exo84. Interacts (via effector domain) with RALBP1. Post-translationally, prenylation is essential for membrane localization. In terms of processing, the farnesylated form confers resistance to the proapoptotic and anti-anchorage-dependent growth effects of some geranylgeranyltransferase I inhibitors.

The protein localises to the cell membrane. The protein resides in the midbody. The enzyme catalyses GTP + H2O = GDP + phosphate + H(+). Alternates between an inactive form bound to GDP and an active form bound to GTP. Activated by a guanine nucleotide-exchange factor (GEF) and inactivated by a GTPase-activating protein (GAP). Multifunctional GTPase involved in a variety of cellular processes including gene expression, cell migration, cell proliferation, oncogenic transformation and membrane trafficking. Accomplishes its multiple functions by interacting with distinct downstream effectors. Acts as a GTP sensor for GTP-dependent exocytosis of dense core vesicles. Required both to stabilize the assembly of the exocyst complex and to localize functional exocyst complexes to the leading edge of migrating cells. Required for suppression of apoptosis. In late stages of cytokinesis, upon completion of the bridge formation between dividing cells, mediates exocyst recruitment to the midbody to drive abscission. Involved in ligand-dependent receptor mediated endocytosis of the EGF and insulin receptors. The protein is Ras-related protein Ral-B (Ralb) of Rattus norvegicus (Rat).